Here is a 452-residue protein sequence, read N- to C-terminus: Keratin, type I cytoskeletal 42 (452 aa).

Positions T4–S93 are head. Positions E94–W129 are coil 1A. Residues E94–L405 form the IF rod domain. The segment at Y130 to T147 is linker 1. Positions I148–L239 are coil 1B. The tract at residues R240–I262 is linker 12. Residues L263 to E401 are coil 2. The interval D402–H452 is tail.

This sequence belongs to the intermediate filament family. Heterodimer of a type I and a type II keratin. Colocalizes with KRT8/KRT18 filament network. Expressed in nail matrix and nail bed epithelium (at protein level). Also expressed in tongue and digits with weak expression in vibrissae and in both filiform and fungiform papillae of oral mucosa.

It is found in the cytoplasm. The sequence is that of Keratin, type I cytoskeletal 42 from Mus musculus (Mouse).